A 121-amino-acid chain; its full sequence is Large ribosomal subunit protein uL22 (121 aa).

Belongs to the universal ribosomal protein uL22 family. As to quaternary structure, part of the 50S ribosomal subunit.

This protein binds specifically to 23S rRNA; its binding is stimulated by other ribosomal proteins, e.g. L4, L17, and L20. It is important during the early stages of 50S assembly. It makes multiple contacts with different domains of the 23S rRNA in the assembled 50S subunit and ribosome. In terms of biological role, the globular domain of the protein is located near the polypeptide exit tunnel on the outside of the subunit, while an extended beta-hairpin is found that lines the wall of the exit tunnel in the center of the 70S ribosome. In Synechococcus sp. (strain CC9311), this protein is Large ribosomal subunit protein uL22.